A 675-amino-acid polypeptide reads, in one-letter code: DNA ligase (675 aa).

NAD(+)-binding positions include 36 to 40, 85 to 86, and Glu118; these read DAVYD and SL. Lys120 functions as the N6-AMP-lysine intermediate in the catalytic mechanism. Residues Arg141, Glu178, Lys298, and Lys322 each coordinate NAD(+). 4 residues coordinate Zn(2+): Cys416, Cys419, Cys434, and Cys439. Residues 598-675 form the BRCT domain; it reads TQPQTLSGKT…SEADLLALLQ (78 aa).

Belongs to the NAD-dependent DNA ligase family. LigA subfamily. The cofactor is Mg(2+). Mn(2+) serves as cofactor.

It catalyses the reaction NAD(+) + (deoxyribonucleotide)n-3'-hydroxyl + 5'-phospho-(deoxyribonucleotide)m = (deoxyribonucleotide)n+m + AMP + beta-nicotinamide D-nucleotide.. Its function is as follows. DNA ligase that catalyzes the formation of phosphodiester linkages between 5'-phosphoryl and 3'-hydroxyl groups in double-stranded DNA using NAD as a coenzyme and as the energy source for the reaction. It is essential for DNA replication and repair of damaged DNA. This Acaryochloris marina (strain MBIC 11017) protein is DNA ligase.